The primary structure comprises 289 residues: MRKELLLRTTNHSAFQNSVYLLGFLRFAKFQLSSRANISNVRPFKGRRTNCAATSVHSNRMEVTYLSQSLAQTIDNELMSDDVGYTTEQLMELAGLSIAQIICREYSLDRFKKVLIFCGPGNNGGDGLVAARHLKHFGYDVTVAYPKEKTKVLFQRLLKLLQHYHVPVVKSATGEDLKLYDLVVDALFGFSFTGEPRSPFDEIIHTINQSNKPVVSVDVPSGTNIDGGSAANALSVNSEMNISLMLPKEGVRHYGKKHYLGGRFIPNSIVEKYNLKVPQFAGDNSYVQL.

Residues 71–277 (AQTIDNELMS…SIVEKYNLKV (207 aa)) enclose the YjeF N-terminal domain. 122 to 126 (NNGGD) contributes to the (6S)-NADPHX binding site. Positions 123 and 185 each coordinate K(+). (6S)-NADPHX contacts are provided by residues 189 to 195 (GFSFTGE) and aspartate 218. Serine 221 lines the K(+) pocket.

Belongs to the NnrE/AIBP family. K(+) serves as cofactor.

The catalysed reaction is (6R)-NADHX = (6S)-NADHX. It carries out the reaction (6R)-NADPHX = (6S)-NADPHX. Catalyzes the epimerization of the S- and R-forms of NAD(P)HX, a damaged form of NAD(P)H that is a result of enzymatic or heat-dependent hydration. This is a prerequisite for the S-specific NAD(P)H-hydrate dehydratase to allow the repair of both epimers of NAD(P)HX. This chain is NAD(P)H-hydrate epimerase, found in Plasmodium vivax (strain Salvador I).